We begin with the raw amino-acid sequence, 241 residues long: Phosphatidylglycerophosphatase B (241 aa).

Residues 1 to 21 (MFKRLSLYTLLLCLVPFFIWG) form a helical membrane-spanning segment. At 22–52 (ISYQWHGNSQLTQADYWLYLLTETGSVPYAL) the chain is on the periplasmic side. The helical transmembrane segment at 53–62 (ITCVLFTLLF) threads the bilayer. Topologically, residues 63 to 67 (AFLFK) are cytoplasmic. Residues 68 to 91 (NPKQWILGVIVMGISVIATQAAKT) form a helical membrane-spanning segment. The Periplasmic segment spans residues 92-158 (GAKALFEEPR…ENETGYSFPS (67 aa)). Positions 94-102 (KALFEEPRP) are phosphatase sequence motif I. The phosphatase sequence motif II stretch occupies residues 157–160 (PSGH). Residues 159–173 (GHTIFAATWLMLAVG) form a helical membrane-spanning segment. His160 acts as the Proton donor; for a subset of substrates in catalysis. At 174 to 184 (FTQLLGNRSFK) the chain is on the cytoplasmic side. A helical transmembrane segment spans residues 185 to 204 (AKLLVVGIAVWGLLMLISRV). The phosphatase sequence motif III stretch occupies residues 202 to 213 (SRVRLGMHYPID). At 205-210 (RLGMHY) the chain is on the periplasmic side. Catalysis depends on His209, which acts as the Nucleophile. A helical transmembrane segment spans residues 211 to 235 (PIDLLVATLLAWLINSIIFAFLKKK). The Cytoplasmic segment spans residues 236-241 (AIFVMK).

Belongs to the PA-phosphatase related phosphoesterase family.

Its subcellular location is the cell inner membrane. The protein localises to the cell outer membrane. It catalyses the reaction a 1,2-diacyl-sn-glycero-3-phospho-(1'-sn-glycero-3'-phosphate) + H2O = a 1,2-diacyl-sn-glycero-3-phospho-(1'-sn-glycerol) + phosphate. It carries out the reaction a 1,2-diacyl-sn-glycerol 3-diphosphate + H2O = a 1,2-diacyl-sn-glycero-3-phosphate + phosphate + H(+). The enzyme catalyses a 1,2-diacyl-sn-glycero-3-phosphate + H2O = a 1,2-diacyl-sn-glycerol + phosphate. The catalysed reaction is di-trans,octa-cis-undecaprenyl diphosphate + H2O = di-trans,octa-cis-undecaprenyl phosphate + phosphate + H(+). It functions in the pathway phospholipid metabolism; phosphatidylglycerol biosynthesis; phosphatidylglycerol from CDP-diacylglycerol: step 2/2. Its function is as follows. Catalyzes the dephosphorylation of diacylglycerol diphosphate (DGPP) to phosphatidate (PA) and the subsequent dephosphorylation of PA to diacylglycerol (DAG). Also has undecaprenyl pyrophosphate phosphatase activity, required for the biosynthesis of the lipid carrier undecaprenyl phosphate. Can also use lysophosphatidic acid (LPA) and phosphatidylglycerophosphate as substrates. The pattern of activities varies according to subcellular location, PGP phosphatase activity is higher in the cytoplasmic membrane, whereas PA and LPA phosphatase activities are higher in the outer membrane. Activity is independent of a divalent cation ion and insensitive to inhibition by N-ethylmaleimide. This Haemophilus influenzae (strain ATCC 51907 / DSM 11121 / KW20 / Rd) protein is Phosphatidylglycerophosphatase B (pgpB).